Reading from the N-terminus, the 156-residue chain is Small ribosomal subunit protein uS7c (156 aa).

This sequence belongs to the universal ribosomal protein uS7 family. As to quaternary structure, part of the 30S ribosomal subunit.

Its subcellular location is the plastid. It localises to the chloroplast. In terms of biological role, one of the primary rRNA binding proteins, it binds directly to 16S rRNA where it nucleates assembly of the head domain of the 30S subunit. The chain is Small ribosomal subunit protein uS7c (rps7) from Cycas revoluta (Sago palm).